The chain runs to 84 residues: Small ribosomal subunit protein uS17 (84 aa).

Belongs to the universal ribosomal protein uS17 family. As to quaternary structure, part of the 30S ribosomal subunit.

Functionally, one of the primary rRNA binding proteins, it binds specifically to the 5'-end of 16S ribosomal RNA. This is Small ribosomal subunit protein uS17 from Treponema pallidum (strain Nichols).